The following is a 157-amino-acid chain: SsrA-binding protein (157 aa).

The protein belongs to the SmpB family.

It localises to the cytoplasm. Functionally, required for rescue of stalled ribosomes mediated by trans-translation. Binds to transfer-messenger RNA (tmRNA), required for stable association of tmRNA with ribosomes. tmRNA and SmpB together mimic tRNA shape, replacing the anticodon stem-loop with SmpB. tmRNA is encoded by the ssrA gene; the 2 termini fold to resemble tRNA(Ala) and it encodes a 'tag peptide', a short internal open reading frame. During trans-translation Ala-aminoacylated tmRNA acts like a tRNA, entering the A-site of stalled ribosomes, displacing the stalled mRNA. The ribosome then switches to translate the ORF on the tmRNA; the nascent peptide is terminated with the 'tag peptide' encoded by the tmRNA and targeted for degradation. The ribosome is freed to recommence translation, which seems to be the essential function of trans-translation. This Chlorobium phaeovibrioides (strain DSM 265 / 1930) (Prosthecochloris vibrioformis (strain DSM 265)) protein is SsrA-binding protein.